The following is a 344-amino-acid chain: Methionine import ATP-binding protein MetN (344 aa).

Positions 2 to 241 (IEINQVNKVF…PKTELAHDFI (240 aa)) constitute an ABC transporter domain. 38 to 45 (GSSGAGKS) is a binding site for ATP.

The protein belongs to the ABC transporter superfamily. Methionine importer (TC 3.A.1.24) family. In terms of assembly, the complex is composed of two ATP-binding proteins (MetN), two transmembrane proteins (MetI) and a solute-binding protein (MetQ).

It localises to the cell inner membrane. It catalyses the reaction L-methionine(out) + ATP + H2O = L-methionine(in) + ADP + phosphate + H(+). It carries out the reaction D-methionine(out) + ATP + H2O = D-methionine(in) + ADP + phosphate + H(+). In terms of biological role, part of the ABC transporter complex MetNIQ involved in methionine import. Responsible for energy coupling to the transport system. The protein is Methionine import ATP-binding protein MetN of Vibrio vulnificus (strain CMCP6).